A 424-amino-acid polypeptide reads, in one-letter code: Catabolic NAD-specific glutamate dehydrogenase RocG (424 aa).

Substrate-binding residues include K80 and K104. Catalysis depends on K116, which acts as the Proton donor. 2 residues coordinate NAD(+): T200 and N231. S358 is a binding site for substrate.

It belongs to the Glu/Leu/Phe/Val dehydrogenases family. Homohexamer. Interacts with transcriptional regulator GltC.

It catalyses the reaction L-glutamate + NAD(+) + H2O = 2-oxoglutarate + NH4(+) + NADH + H(+). Functionally, devoted to catabolic function of glutamate (and other amino acids of the glutamate family) utilization as sole nitrogen source. It is not involved in anabolic function of glutamate biosynthesis since B.subtilis possesses only one route of glutamate biosynthesis from ammonia, catalyzed by glutamate synthase. Wild-type cells are unable to utilize glutamate or glutamine as a sole carbon source; thus RocG does not function physiologically to synthesize glutamate, but it is involved in the utilization of arginine, and proline as carbon or nitrogen source. The catabolic RocG is essential for controlling gltAB expression via an inhibitory interactions with the transcriptional regulator GltC in response to the availability of sugars. The chain is Catabolic NAD-specific glutamate dehydrogenase RocG from Bacillus subtilis (strain 168).